The chain runs to 546 residues: Probable Dol-P-Man:Man(7)GlcNAc(2)-PP-Dol alpha-1,6-mannosyltransferase (546 aa).

Helical transmembrane passes span 5–25 (ESIC…YYSY), 67–87 (FIPS…VNPL), 113–133 (FGTL…HLVY), 166–186 (ILVF…MCLI), 200–220 (LLLV…LIDS), 258–278 (LPWL…FVYI), 283–303 (LLIY…HKEW), 305–325 (FIIY…SLCF), and 340–360 (LMFF…LYVF).

It belongs to the glycosyltransferase 22 family.

Its subcellular location is the endoplasmic reticulum membrane. The catalysed reaction is an alpha-D-Man-(1-&gt;2)-alpha-D-Man-(1-&gt;2)-alpha-D-Man-(1-&gt;3)-[alpha-D-Man-(1-&gt;2)-alpha-D-Man-(1-&gt;3)-alpha-D-Man-(1-&gt;6)]-beta-D-Man-(1-&gt;4)-beta-D-GlcNAc-(1-&gt;4)-alpha-D-GlcNAc-diphospho-di-trans,poly-cis-dolichol + a di-trans,poly-cis-dolichyl beta-D-mannosyl phosphate = an alpha-D-Man-(1-&gt;2)-alpha-D-Man-(1-&gt;2)-alpha-D-Man-(1-&gt;3)-[alpha-D-Man-(1-&gt;2)-alpha-D-Man-(1-&gt;3)-[alpha-D-Man-(1-&gt;6)]-alpha-D-Man-(1-&gt;6)]-beta-D-Man-(1-&gt;4)-beta-D-GlcNAc-(1-&gt;4)-alpha-D-GlcNAc-diphospho-di-trans,poly-cis-dolichol + a di-trans,poly-cis-dolichyl phosphate + H(+). The protein operates within protein modification; protein glycosylation. Functionally, mannosyltransferase that operates in the biosynthetic pathway of dolichol-linked oligosaccharides, the glycan precursors employed in protein asparagine (N)-glycosylation. The assembly of dolichol-linked oligosaccharides begins on the cytosolic side of the endoplasmic reticulum membrane and finishes in its lumen. The sequential addition of sugars to dolichol pyrophosphate produces dolichol-linked oligosaccharides containing fourteen sugars, including two GlcNAcs, nine mannoses and three glucoses. Once assembled, the oligosaccharide is transferred from the lipid to nascent proteins by oligosaccharyltransferases. In the lumen of the endoplasmic reticulum, adds the eighth mannose residue in an alpha-1,6 linkage onto Man(7)GlcNAc(2)-PP-dolichol to produce Man(8)GlcNAc(2)-PP-dolichol. The polypeptide is Probable Dol-P-Man:Man(7)GlcNAc(2)-PP-Dol alpha-1,6-mannosyltransferase (alg12) (Schizosaccharomyces pombe (strain 972 / ATCC 24843) (Fission yeast)).